Consider the following 614-residue polypeptide: MGLHTLLLLLLLRISASAAASRPPLDTLGIPPQDEAYFRGGVIRCRDGSGRFARDKLNDDFCDCPDGTDEPGTSACPEGKFYCQNAGHSPITIFSSRVNDGICDCCDGSDEYDSNVTCKNTCWEAGKAARDKLKKKVATYKSGVVIRNQEIQKAKVAFAKDEAELAKLKGEEKILQGLVDKLTEQKKLIEKAEEEERLRKEKEEKRMKEEAEKQAADEKKASDASQEVDSQENHETVQEDESKVAEHHDGHATSHDNHTPESESSVEQHDPESQDDISIKAAPADESPPEETSAAPTKEQESTPADSEGLSREELGRLVASRWTGEKVDEVSKDDKNEHEAEHDMPEHSEETHEDESDVPESAEDSYAGYHSEVEDDRHKYDDEDFSHESDDEYVDDHDEHVASYKSDDDQKGDDHSDFTASGQASWLDKIQQTVQNVLRTFNFFKTPVDLSEASRVRKEYDDASSKLSKIQSRISTLTDKLKHDFGKEKEFYYFYDQCFESKEGKYVYKVCPFKKASQVEGHSTTSLGRWDKFEESYRVMQFSNGDRCWNGPDRSLKVRLRCGLNNELNGVDEPSRCEYVAVLSTPALCDEQKLKELEQKLEASSNQRDHDEL.

The first 20 residues, 1 to 20, serve as a signal peptide directing secretion; that stretch reads MGLHTLLLLLLLRISASAAA. N-linked (GlcNAc...) asparagine glycosylation occurs at Asn115. Composition is skewed to basic and acidic residues over residues 194-222, 231-272, and 324-351; these read EEER…KKAS, QENH…HDPE, and TGEK…HSEE. The tract at residues 194–396 is disordered; sequence EEERLRKEKE…SHESDDEYVD (203 aa). Positions 352 to 364 are enriched in acidic residues; the sequence is THEDESDVPESAE. The span at 372 to 382 shows a compositional bias: basic and acidic residues; sequence SEVEDDRHKYD. The segment covering 383 to 396 has biased composition (acidic residues); the sequence is DEDFSHESDDEYVD. Positions 497–592 constitute an MRH domain; it reads DQCFESKEGK…VLSTPALCDE (96 aa). 3 disulfides stabilise this stretch: Cys499–Cys512, Cys549–Cys578, and Cys563–Cys590.

As to quaternary structure, heterodimer of a catalytic alpha subunit and a beta subunit.

Its subcellular location is the endoplasmic reticulum. Its pathway is glycan metabolism; N-glycan metabolism. Its function is as follows. Regulatory subunit of glucosidase II. May be required for defense response elicited by pathogen-associated molecular patterns (PAMPs). This chain is Glucosidase 2 subunit beta, found in Oryza sativa subsp. indica (Rice).